The sequence spans 103 residues: Cystatin-A (103 aa).

Methionine 1 carries the post-translational modification N-acetylmethionine. Residues 52–56 (QVVAG) carry the Secondary area of contact motif.

It belongs to the cystatin family.

Its subcellular location is the cytoplasm. Its function is as follows. This is an intracellular thiol proteinase inhibitor. In Rattus norvegicus (Rat), this protein is Cystatin-A (Csta).